The primary structure comprises 91 residues: Large ribosomal subunit protein uL23 (91 aa).

Belongs to the universal ribosomal protein uL23 family. As to quaternary structure, part of the 50S ribosomal subunit. Contacts protein L29, and trigger factor when it is bound to the ribosome.

Functionally, one of the early assembly proteins it binds 23S rRNA. One of the proteins that surrounds the polypeptide exit tunnel on the outside of the ribosome. Forms the main docking site for trigger factor binding to the ribosome. The sequence is that of Large ribosomal subunit protein uL23 from Staphylococcus aureus (strain USA300).